The sequence spans 210 residues: Pyridoxine/pyridoxamine 5'-phosphate oxidase (210 aa).

Substrate-binding positions include 7–10 (RDEY) and Lys-65. Residues 60-65 (RMVLLK), 75-76 (FT), Arg-81, Lys-82, and Gln-104 contribute to the FMN site. Substrate contacts are provided by Tyr-122, Arg-126, and Ser-130. Residues 139–140 (QS) and Trp-183 each bind FMN. 189-191 (RLH) contributes to the substrate binding site. Arg-193 is a binding site for FMN.

The protein belongs to the pyridoxamine 5'-phosphate oxidase family. As to quaternary structure, homodimer. Requires FMN as cofactor.

It catalyses the reaction pyridoxamine 5'-phosphate + O2 + H2O = pyridoxal 5'-phosphate + H2O2 + NH4(+). It carries out the reaction pyridoxine 5'-phosphate + O2 = pyridoxal 5'-phosphate + H2O2. The protein operates within cofactor metabolism; pyridoxal 5'-phosphate salvage; pyridoxal 5'-phosphate from pyridoxamine 5'-phosphate: step 1/1. It participates in cofactor metabolism; pyridoxal 5'-phosphate salvage; pyridoxal 5'-phosphate from pyridoxine 5'-phosphate: step 1/1. Catalyzes the oxidation of either pyridoxine 5'-phosphate (PNP) or pyridoxamine 5'-phosphate (PMP) into pyridoxal 5'-phosphate (PLP). The sequence is that of Pyridoxine/pyridoxamine 5'-phosphate oxidase from Haemophilus influenzae (strain ATCC 51907 / DSM 11121 / KW20 / Rd).